The primary structure comprises 70 residues: MWFEILPGLSVMGVCLLIPGLATAYIHRFTNGGKEKRVAHFGYHWNLMERDRRISGVDRYYVSKGLENID.

Residues 1–21 (MWFEILPGLSVMGVCLLIPGL) form a helical membrane-spanning segment.

This sequence belongs to the complex I NDUFA1 subunit family. In terms of assembly, complex I is composed of 45 different subunits.

It localises to the mitochondrion inner membrane. Its function is as follows. Accessory subunit of the mitochondrial membrane respiratory chain NADH dehydrogenase (Complex I), that is believed not to be involved in catalysis. Complex I functions in the transfer of electrons from NADH to the respiratory chain. The immediate electron acceptor for the enzyme is believed to be ubiquinone. The polypeptide is NADH dehydrogenase [ubiquinone] 1 alpha subcomplex subunit 1 (NDUFA1) (Gorilla gorilla gorilla (Western lowland gorilla)).